We begin with the raw amino-acid sequence, 114 residues long: Large ribosomal subunit protein uL22 (114 aa).

The protein belongs to the universal ribosomal protein uL22 family. As to quaternary structure, part of the 50S ribosomal subunit.

Its function is as follows. This protein binds specifically to 23S rRNA; its binding is stimulated by other ribosomal proteins, e.g. L4, L17, and L20. It is important during the early stages of 50S assembly. It makes multiple contacts with different domains of the 23S rRNA in the assembled 50S subunit and ribosome. The globular domain of the protein is located near the polypeptide exit tunnel on the outside of the subunit, while an extended beta-hairpin is found that lines the wall of the exit tunnel in the center of the 70S ribosome. The sequence is that of Large ribosomal subunit protein uL22 from Streptococcus gordonii (strain Challis / ATCC 35105 / BCRC 15272 / CH1 / DL1 / V288).